Reading from the N-terminus, the 152-residue chain is UPF0266 membrane protein ESA_01432 (152 aa).

3 consecutive transmembrane segments (helical) span residues 1–21 (MTLT…WAIY), 45–65 (ADSL…VASH), and 67–87 (ALLT…LFWI).

Belongs to the UPF0266 family.

The protein localises to the cell inner membrane. This is UPF0266 membrane protein ESA_01432 from Cronobacter sakazakii (strain ATCC BAA-894) (Enterobacter sakazakii).